A 477-amino-acid chain; its full sequence is 3-succinoylsemialdehyde-pyridine dehydrogenase (477 aa).

An NAD(+)-binding site is contributed by 202 to 208 (GDGPGVG). Active-site residues include Glu246 and Cys280.

It belongs to the aldehyde dehydrogenase family.

It catalyses the reaction 4-oxo-4-(pyridin-3-yl)butanal + NADP(+) + H2O = 4-oxo-4-(pyridin-3-yl)butanoate + NADPH + 2 H(+). It participates in alkaloid degradation; nicotine degradation. Functionally, catalyzes the dehydrogenation of 3-succinoylsemialdehyde-pyridine to 3-succinoyl-pyridine in the nicotine degradation pathway. The sequence is that of 3-succinoylsemialdehyde-pyridine dehydrogenase (ald) from Pseudomonas sp.